We begin with the raw amino-acid sequence, 218 residues long: Ropporin-1-like protein (218 aa).

Residues 17 to 54 (PALPNMLKQFTKAAIRTQPRDVLQWAADYFSALSKGQD) form the RIIa domain. A disordered region spans residues 199–218 (QSQGGMVQPSNFTSLHTAEK).

Belongs to the ropporin family. As to quaternary structure, component of axonemal radial spoke complexes.

The protein localises to the cell projection. The protein resides in the cilium. It is found in the flagellum. In terms of biological role, functions as part of axonemal radial spoke complexes that play an important part in the motility of sperm and cilia. Important for male fertility. Involved in fibrous sheath integrity and sperm motility, plays a role in PKA-dependent signaling processes required for spermatozoa capacitation. In Danio rerio (Zebrafish), this protein is Ropporin-1-like protein (ropn1l).